Reading from the N-terminus, the 2112-residue chain is Phenolphthiocerol synthesis polyketide synthase type I Pks15/1 (2112 aa).

The Ketosynthase family 3 (KS3) domain occupies 46–469 (TEPVAVVGIG…GTNAHLILEE (424 aa)). Residues Cys216, His351, and His391 each act as for beta-ketoacyl synthase activity in the active site. The acyltransferase stretch occupies residues 579-893 (TVVVFPGQGA…GQVFTTGVPV (315 aa)). The For acyltransferase activity role is filled by Ser670. The tract at residues 941–1063 (HALLGAVVER…GMLGVAAAET (123 aa)) is N-terminal hotdog fold. A dehydratase region spans residues 941–1101 (HALLGAVVER…YAYGPAFQGL (161 aa)). Positions 941–1215 (HALLGAVVER…TRPITAEQLR (275 aa)) constitute a PKS/mFAS DH domain. His973 (proton acceptor; for dehydratase activity) is an active-site residue. Residues 1075 to 1215 (AESVDISDGY…TRPITAEQLR (141 aa)) form a C-terminal hotdog fold region. The active-site Proton donor; for dehydratase activity is Asp1136. The interval 1406-1711 (GTLEDLVIQP…QARHIGKVVL (306 aa)) is enoylreductase. NADP(+) is bound by residues 1536-1553 (VLIH…VQLA) and 1725-1740 (TVVI…GVLA). Positions 1724 to 1905 (GTVVITGATG…SLAWGLWEQP (182 aa)) are beta-ketoacyl reductase. One can recognise a Carrier domain in the interval 2010-2085 (ELLVGLVCLQ…AVAEYVAQQM (76 aa)). Ser2045 carries the post-translational modification O-(pantetheine 4'-phosphoryl)serine. The span at 2084-2100 (QMSGSRPTESGDPTSQV) shows a compositional bias: polar residues. Positions 2084–2112 (QMSGSRPTESGDPTSQVVEPAAAEVSVHA) are disordered.

The protein belongs to the thiolase-like superfamily. Beta-ketoacyl-ACP synthases family. Requires pantetheine 4'-phosphate as cofactor.

The enzyme catalyses a fatty acyl-[ACP] + malonyl-[ACP] + H(+) = a 3-oxoacyl-[ACP] + holo-[ACP] + CO2. It participates in lipid metabolism; fatty acid biosynthesis. In terms of biological role, catalyzes the elongation by iterative transfer of p-hydroxybenzoyl group from FadD22 (pHBA-S-FAdD22) to form p-hydroxyphenylalkanoate (pHPA) intermediates during phenolphthiocerol (PPOL) biosynthesis. PPOL is an important intermediate in the biosynthesis of phenolic glycolipid (mycosid B). In Mycobacterium bovis (strain ATCC BAA-935 / AF2122/97), this protein is Phenolphthiocerol synthesis polyketide synthase type I Pks15/1 (pks15/1).